A 1608-amino-acid chain; its full sequence is Hemolysin (1608 aa).

The N-terminal stretch at 1–30 (MKNNNFRLSAAGKLAAALAIILAASAGAYA) is a signal peptide. Disordered regions lie at residues 296–315 (SRVD…QNYR), 452–488 (KSSE…LRSE), 716–737 (EHTR…LSGG), 971–1030 (AVNL…SASQ), 1168–1199 (AEST…TGGN), and 1437–1469 (PQQD…QGPL). Composition is skewed to polar residues over residues 303 to 313 (SNKNGGDNYQN) and 460 to 474 (RNHT…WSNS). Composition is skewed to basic and acidic residues over residues 478 to 488 (ESLKASELRSE) and 716 to 726 (EHTRDSEKTTR). Polar residues predominate over residues 727–736 (TENSASSLSG). The span at 977-996 (DSHRSEAAANRQDEQSRDTR) shows a compositional bias: basic and acidic residues. Positions 1021 to 1030 (TQRSNSSASQ) are enriched in polar residues.

Its subcellular location is the cell outer membrane. Its function is as follows. Bacterial hemolysins are exotoxins that attack blood cell membranes and cause cell rupture by mechanisms not clearly defined. Cell-bound hemolysin, which releases heme-iron from erythrocytes by interaction with the erythrocyte membrane. ShlA requires ShlB function. This is Hemolysin (shlA) from Serratia marcescens.